Reading from the N-terminus, the 856-residue chain is DNA mismatch repair protein MutS (856 aa).

ATP is bound at residue Gly618 to Ser625.

The protein belongs to the DNA mismatch repair MutS family.

Its function is as follows. This protein is involved in the repair of mismatches in DNA. It is possible that it carries out the mismatch recognition step. This protein has a weak ATPase activity. In Shewanella putrefaciens (strain CN-32 / ATCC BAA-453), this protein is DNA mismatch repair protein MutS.